The primary structure comprises 417 residues: F-box protein At3g07870 (417 aa).

Positions 22-68 (GGGLESLPEDIIADIFSRLPISSIARLMFVCRSWRSVLTQHGRLSSS) constitute an F-box domain.

The sequence is that of F-box protein At3g07870 from Arabidopsis thaliana (Mouse-ear cress).